The primary structure comprises 340 residues: Heat-inducible transcription repressor HrcA (340 aa).

This sequence belongs to the HrcA family.

Functionally, negative regulator of class I heat shock genes (grpE-dnaK-dnaJ and groELS operons). Prevents heat-shock induction of these operons. The protein is Heat-inducible transcription repressor HrcA of Mycoplasma mycoides subsp. mycoides SC (strain CCUG 32753 / NCTC 10114 / PG1).